The chain runs to 444 residues: Ubiquitin carboxyl-terminal hydrolase MINDY-3 (444 aa).

Cysteine 51 (nucleophile) is an active-site residue. Serine 124 is subject to Phosphoserine. Residue histidine 286 is the Proton acceptor of the active site.

It belongs to the MINDY deubiquitinase family. FAM188 subfamily. In terms of assembly, interacts with COPS5.

Its subcellular location is the nucleus. The catalysed reaction is Thiol-dependent hydrolysis of ester, thioester, amide, peptide and isopeptide bonds formed by the C-terminal Gly of ubiquitin (a 76-residue protein attached to proteins as an intracellular targeting signal).. Hydrolase that can remove 'Lys-48'-linked conjugated ubiquitin from proteins. This chain is Ubiquitin carboxyl-terminal hydrolase MINDY-3, found in Mus musculus (Mouse).